A 127-amino-acid chain; its full sequence is Small ribosomal subunit protein uS12 (127 aa).

Positions 8–28 (IRTEREKARQKTKSPALKQCP) are disordered. Asp89 carries the 3-methylthioaspartic acid modification. Residues 102-127 (LDTAGVKDRKQGRSKYGTKRPKEAKK) form a disordered region. Basic residues predominate over residues 113–127 (GRSKYGTKRPKEAKK).

Belongs to the universal ribosomal protein uS12 family. In terms of assembly, part of the 30S ribosomal subunit. Contacts proteins S8 and S17. May interact with IF1 in the 30S initiation complex.

Its function is as follows. With S4 and S5 plays an important role in translational accuracy. Functionally, interacts with and stabilizes bases of the 16S rRNA that are involved in tRNA selection in the A site and with the mRNA backbone. Located at the interface of the 30S and 50S subunits, it traverses the body of the 30S subunit contacting proteins on the other side and probably holding the rRNA structure together. The combined cluster of proteins S8, S12 and S17 appears to hold together the shoulder and platform of the 30S subunit. In Nostoc sp. (strain PCC 7120 / SAG 25.82 / UTEX 2576), this protein is Small ribosomal subunit protein uS12.